A 232-amino-acid polypeptide reads, in one-letter code: Phosphoglycolate phosphatase (232 aa).

Asp8 serves as the catalytic Nucleophile. 2 residues coordinate Mg(2+): Asp8 and Asp10. Position 155 (Lys155) interacts with substrate. Asp178 and Asp182 together coordinate Mg(2+).

This sequence belongs to the archaeal SPP-like hydrolase family. The cofactor is Mg(2+).

The catalysed reaction is 2-phosphoglycolate + H2O = glycolate + phosphate. Catalyzes the dephosphorylation of 2-phosphoglycolate. The polypeptide is Phosphoglycolate phosphatase (Methanospirillum hungatei JF-1 (strain ATCC 27890 / DSM 864 / NBRC 100397 / JF-1)).